Reading from the N-terminus, the 188-residue chain is Putative pre-16S rRNA nuclease (188 aa).

The interval 144-188 (HAPGRVVAGPKGRRKARHRGQGGTGTEQQADAGGRARPHATEGKG) is disordered. Basic residues predominate over residues 154-163 (KGRRKARHRG).

Belongs to the YqgF nuclease family.

It localises to the cytoplasm. In terms of biological role, could be a nuclease involved in processing of the 5'-end of pre-16S rRNA. The chain is Putative pre-16S rRNA nuclease from Kineococcus radiotolerans (strain ATCC BAA-149 / DSM 14245 / SRS30216).